The following is an 850-amino-acid chain: Penicillin-binding protein 1A (850 aa).

Residues 1–5 (MKFVK) lie on the Cytoplasmic side of the membrane. Residues 6 to 26 (YFLILAVCCILLGAGSIYGLY) traverse the membrane as a helical; Signal-anchor for type II membrane protein segment. Residues 27–850 (RYIEPQLPDV…IDNGEAQELF (824 aa)) are Periplasmic-facing. The transglycosylase stretch occupies residues 48 to 216 (MQIYSADGEL…STFNPLYSMD (169 aa)). The Proton donor; for transglycosylase activity role is filled by glutamate 86. The tract at residues 400-710 (DVLQTGQQIW…GWRAGRDLQR (311 aa)) is transpeptidase. The Acyl-ester intermediate; for transpeptidase activity role is filled by serine 465.

This sequence in the N-terminal section; belongs to the glycosyltransferase 51 family. It in the C-terminal section; belongs to the transpeptidase family.

It localises to the cell inner membrane. It catalyses the reaction [GlcNAc-(1-&gt;4)-Mur2Ac(oyl-L-Ala-gamma-D-Glu-L-Lys-D-Ala-D-Ala)](n)-di-trans,octa-cis-undecaprenyl diphosphate + beta-D-GlcNAc-(1-&gt;4)-Mur2Ac(oyl-L-Ala-gamma-D-Glu-L-Lys-D-Ala-D-Ala)-di-trans,octa-cis-undecaprenyl diphosphate = [GlcNAc-(1-&gt;4)-Mur2Ac(oyl-L-Ala-gamma-D-Glu-L-Lys-D-Ala-D-Ala)](n+1)-di-trans,octa-cis-undecaprenyl diphosphate + di-trans,octa-cis-undecaprenyl diphosphate + H(+). The catalysed reaction is Preferential cleavage: (Ac)2-L-Lys-D-Ala-|-D-Ala. Also transpeptidation of peptidyl-alanyl moieties that are N-acyl substituents of D-alanine.. The protein operates within cell wall biogenesis; peptidoglycan biosynthesis. Functionally, cell wall formation. Synthesis of cross-linked peptidoglycan from the lipid intermediates. The enzyme has a penicillin-insensitive transglycosylase N-terminal domain (formation of linear glycan strands) and a penicillin-sensitive transpeptidase C-terminal domain (cross-linking of the peptide subunits). The polypeptide is Penicillin-binding protein 1A (mrcA) (Escherichia coli (strain K12)).